A 149-amino-acid chain; its full sequence is Large ribosomal subunit protein bL20m (149 aa).

The transit peptide at 1-9 (MVFLSLSRW) directs the protein to the mitochondrion.

It belongs to the bacterial ribosomal protein bL20 family. As to quaternary structure, component of the mitochondrial ribosome large subunit (39S) which comprises a 16S rRNA and about 50 distinct proteins.

It localises to the mitochondrion. This Xenopus laevis (African clawed frog) protein is Large ribosomal subunit protein bL20m (mrpl20).